We begin with the raw amino-acid sequence, 194 residues long: Inosine triphosphate pyrophosphatase (194 aa).

Residue Ala-2 is modified to N-acetylalanine. 14 to 19 (TGNAKK) serves as a coordination point for ITP. Glu-44 serves as a coordination point for Mg(2+). ITP is bound by residues Lys-56, 72–73 (DT), Lys-89, 149–152 (FGWD), Lys-172, and 177–178 (HR).

The protein belongs to the HAM1 NTPase family. Homodimer. It depends on Mg(2+) as a cofactor. As to expression, ubiquitous. Highly expressed in heart, liver, sex glands, thyroid and adrenal gland.

Its subcellular location is the cytoplasm. It carries out the reaction ITP + H2O = IMP + diphosphate + H(+). The enzyme catalyses dITP + H2O = dIMP + diphosphate + H(+). It catalyses the reaction XTP + H2O = XMP + diphosphate + H(+). The catalysed reaction is N(6)-hydroxy-dATP + H2O = N(6)-hydroxy-dAMP + diphosphate + H(+). Its function is as follows. Pyrophosphatase that hydrolyzes the non-canonical purine nucleotides inosine triphosphate (ITP), deoxyinosine triphosphate (dITP) as well as 2'-deoxy-N-6-hydroxylaminopurine triphosphate (dHAPTP) and xanthosine 5'-triphosphate (XTP) to their respective monophosphate derivatives. The enzyme does not distinguish between the deoxy- and ribose forms. Probably excludes non-canonical purines from RNA and DNA precursor pools, thus preventing their incorporation into RNA and DNA and avoiding chromosomal lesions. The protein is Inosine triphosphate pyrophosphatase of Homo sapiens (Human).